The following is a 280-amino-acid chain: Putative pyruvate, phosphate dikinase regulatory protein (280 aa).

Position 147–154 (147–154 (GASRSSKT)) interacts with ADP.

It belongs to the pyruvate, phosphate/water dikinase regulatory protein family. PDRP subfamily.

It catalyses the reaction N(tele)-phospho-L-histidyl/L-threonyl-[pyruvate, phosphate dikinase] + ADP = N(tele)-phospho-L-histidyl/O-phospho-L-threonyl-[pyruvate, phosphate dikinase] + AMP + H(+). It carries out the reaction N(tele)-phospho-L-histidyl/O-phospho-L-threonyl-[pyruvate, phosphate dikinase] + phosphate + H(+) = N(tele)-phospho-L-histidyl/L-threonyl-[pyruvate, phosphate dikinase] + diphosphate. Functionally, bifunctional serine/threonine kinase and phosphorylase involved in the regulation of the pyruvate, phosphate dikinase (PPDK) by catalyzing its phosphorylation/dephosphorylation. This chain is Putative pyruvate, phosphate dikinase regulatory protein, found in Pelobacter propionicus (strain DSM 2379 / NBRC 103807 / OttBd1).